Consider the following 393-residue polypeptide: Na(+)/H(+) antiporter NhaA (393 aa).

11 consecutive transmembrane segments (helical) span residues 24–44, 58–78, 96–116, 126–146, 155–175, 178–198, 214–234, 267–287, 300–320, 338–358, and 369–389; these read GGLVLMAVALAAIVTANSPLA, LSLLHWINDALMALFFLLVGL, ILPGAAALGGMLFPALFYILF, GWAIPTATDIAFALGVISLFG, IFLAALAIIDDLGAVVIIALF, SDLNLLALAAAAAVLAALYGM, AVLWVLVFASGIHATLAGVLL, VAFIVVPIFGFANAGVSFSGV, VAAGLLLGKLVGVLSTVFLLV, GVAALCGIGFTMSLFIGLLAF, and MGILLGSLLSGLVGAAMLATF.

Belongs to the NhaA Na(+)/H(+) (TC 2.A.33) antiporter family.

It is found in the cell inner membrane. The catalysed reaction is Na(+)(in) + 2 H(+)(out) = Na(+)(out) + 2 H(+)(in). In terms of biological role, na(+)/H(+) antiporter that extrudes sodium in exchange for external protons. The protein is Na(+)/H(+) antiporter NhaA of Rhizobium etli (strain ATCC 51251 / DSM 11541 / JCM 21823 / NBRC 15573 / CFN 42).